The primary structure comprises 113 residues: Large ribosomal subunit protein uL22 (113 aa).

Belongs to the universal ribosomal protein uL22 family. In terms of assembly, part of the 50S ribosomal subunit.

Functionally, this protein binds specifically to 23S rRNA; its binding is stimulated by other ribosomal proteins, e.g. L4, L17, and L20. It is important during the early stages of 50S assembly. It makes multiple contacts with different domains of the 23S rRNA in the assembled 50S subunit and ribosome. In terms of biological role, the globular domain of the protein is located near the polypeptide exit tunnel on the outside of the subunit, while an extended beta-hairpin is found that lines the wall of the exit tunnel in the center of the 70S ribosome. The sequence is that of Large ribosomal subunit protein uL22 from Bacillus mycoides (strain KBAB4) (Bacillus weihenstephanensis).